The sequence spans 100 residues: Large ribosomal subunit protein uL23 (100 aa).

It belongs to the universal ribosomal protein uL23 family. As to quaternary structure, part of the 50S ribosomal subunit. Contacts protein L29, and trigger factor when it is bound to the ribosome.

One of the early assembly proteins it binds 23S rRNA. One of the proteins that surrounds the polypeptide exit tunnel on the outside of the ribosome. Forms the main docking site for trigger factor binding to the ribosome. This Parasynechococcus marenigrum (strain WH8102) protein is Large ribosomal subunit protein uL23.